Here is a 173-residue protein sequence, read N- to C-terminus: CKLF-like MARVEL transmembrane domain-containing protein 8 (173 aa).

The region spanning 36–168 is the MARVEL domain; sequence FLRTLPGLLI…NTYFSFIAWR (133 aa). Helical transmembrane passes span 40 to 60, 70 to 90, 105 to 125, and 147 to 167; these read LPGLLIVAEIVLGLLVWTLIA, FGWVMFVAVFYWVLTVFFLII, TTVGLWFNGSAFALYLSAAIV, and FFAFLVTICYAGNTYFSFIAW.

The protein belongs to the chemokine-like factor family.

The protein resides in the membrane. The polypeptide is CKLF-like MARVEL transmembrane domain-containing protein 8 (CMTM8) (Bos taurus (Bovine)).